The primary structure comprises 99 residues: Acylphosphatase (99 aa).

Positions 5-97 (ILQVMIRGRV…RAGEKFSVLP (93 aa)) constitute an Acylphosphatase-like domain. Catalysis depends on residues R20 and N38.

Belongs to the acylphosphatase family.

It catalyses the reaction an acyl phosphate + H2O = a carboxylate + phosphate + H(+). The chain is Acylphosphatase (acyP) from Bradyrhizobium diazoefficiens (strain JCM 10833 / BCRC 13528 / IAM 13628 / NBRC 14792 / USDA 110).